The chain runs to 97 residues: Large ribosomal subunit protein eL21 (97 aa).

The span at M1–G24 shows a compositional bias: basic residues. The interval M1–L25 is disordered.

This sequence belongs to the eukaryotic ribosomal protein eL21 family.

This chain is Large ribosomal subunit protein eL21 (rpl21e), found in Pyrococcus abyssi (strain GE5 / Orsay).